A 4911-amino-acid polypeptide reads, in one-letter code: Histone-lysine N-methyltransferase 2C (4911 aa).

Residues 1-101 (MSSEEDKSVE…EDAEAEVDNS (101 aa)) form a disordered region. Residues 12-28 (PQPPPPPPEEPGAPAPS) show a composition bias toward pro residues. Ser28 and Ser46 each carry phosphoserine. The segment at residues 34-46 (KRPRGRPRKDGAS) is a DNA-binding region (a.T hook). Positions 50–59 (RARKKPRSRG) are enriched in basic residues. The segment covering 64-81 (EDEDSMDGLETTETETIV) has biased composition (acidic residues). Ser89 carries the phosphoserine modification. Positions 92 to 112 (EDAEAEVDNSKQLIPTLQRSV) form a coiled coil. Ser113 bears the Phosphoserine mark. Positions 164–203 (RNQPSNKKDIDDNSNGTYEKMQNSAPRKQRGQRKERSPQQ) are disordered. The span at 176–189 (NSNGTYEKMQNSAP) shows a compositional bias: polar residues. Ser200 is subject to Phosphoserine. A C2HC pre-PHD-type 1; degenerate zinc finger spans residues 227-262 (ELSLVGLPDAIDIQALFDSTGTCWAHHRCVEWSLGV). PHD-type zinc fingers lie at residues 283–331 (ERCA…PEHI), 341–391 (DANC…CKVC), 388–438 (CKVC…CRIC), and 464–520 (DNLC…CKHL). The segment at 344–389 (CAVCDSPGDLLDQFFCTTCGQHYHGMCLDIAVTPLKRAGWQCPECK) adopts an RING-type zinc-finger fold. In terms of domain architecture, DHHC spans 436 to 489 (RICIECGTRSSSQWHHNCLICDNCYQQQDNLCPFCGKCYHPELQKDMLHCNMCK). Residues 644 to 672 (EDKMEVTENIEVVTHQITVQQEQLQLLEE) adopt a coiled-coil conformation. Residues 721–730 (QGEKEQKENS) show a composition bias toward basic and acidic residues. The disordered stretch occupies residues 721–742 (QGEKEQKENSELSTGLMDSEMT). Lys758 bears the N6-acetyllysine mark. Residues 763-791 (SSETESSFSSSADISKADVSSSPTPSSDL) are compositionally biased toward low complexity. Disordered stretches follow at residues 763-798 (SSET…DMLH), 828-864 (PAIT…DISE), and 885-912 (GRGS…RSKL). Over residues 830 to 842 (ITKRKFSPGRPRS) the composition is skewed to basic residues. A compositionally biased stretch (polar residues) spans 845 to 856 (GAWSTHNTVSPP). Ser854 is subject to Phosphoserine. 3 PHD-type zinc fingers span residues 957-1010 (QDMC…CTVC), 1007-1057 (CTVC…CVWC), and 1084-1139 (LSSC…CRPY). The interval 1215–1324 (AVLQTPPDIQ…LPCRDDGWSE (110 aa)) is disordered. The span at 1224 to 1270 (QSEHSRDGEMDDSREGELMDCDGKSESSPEREAVDDETKGVEGTDGV) shows a compositional bias: basic and acidic residues. Ser1301 is subject to Phosphoserine. Residues 1338–1366 (TESTEKIKKRYRKRKNKLEETFPAYLQEA) adopt a coiled-coil conformation. Low complexity predominate over residues 1406-1416 (PSLDPLLSSSS). Disordered regions lie at residues 1406 to 1431 (PSLD…DDPL) and 1458 to 1485 (HSDI…PLSE). Polar residues predominate over residues 1467–1482 (DPSSLPQPNVNQSSRP). N6-acetyllysine is present on Lys1508. Disordered stretches follow at residues 1604–1630 (FNPM…DTMS) and 1709–2448 (VQMS…SPVA). Polar residues-rich tracts occupy residues 1610–1620 (DPNNSWTSSAP) and 1709–1727 (VQMS…SIDP). The span at 1729-1753 (SRIDSELFKDPLKQRESEHEQEWKF) shows a compositional bias: basic and acidic residues. Residues 1754–1787 (RQQMRQKSKQQAKIEATQKLEQVKNEQQQQQQQQ) are a coiled coil. Lys1772 carries the post-translational modification N6-acetyllysine. A compositionally biased stretch (polar residues) spans 1788 to 1823 (FGSQHLLVQSGSDTPSSGIQSPLTPQPGNGNMSPAQ). Over residues 1851 to 1860 (QAPPPPPAPS) the composition is skewed to pro residues. Low complexity predominate over residues 1861–1875 (RIPIQDSLSQAQTSQ). Over residues 1927-1945 (TPLSSVSRPLQMNETTANR) the composition is skewed to polar residues. Ser1987 bears the Phosphoserine mark. The residue at position 2009 (Lys2009) is an N6-acetyllysine. 4 stretches are compositionally biased toward polar residues: residues 2054–2065 (QDPYGSVSQASR), 2085–2094 (FSHNQSNDPY), 2115–2131 (AFSQ…QDPY), and 2144–2159 (SYSQ…TDPY). A compositionally biased stretch (low complexity) spans 2173-2187 (PYSQQPQTPRPSTQT). Composition is skewed to polar residues over residues 2302–2319 (SPMT…SQTA), 2335–2353 (CASS…SGVS), and 2362–2375 (SGVT…NMAQ). The segment covering 2377–2389 (DTEKLRQRQKLRE) has biased composition (basic and acidic residues). Positions 2390–2399 (IILQQQQQKK) are enriched in low complexity. Arg2454 and Arg2571 each carry asymmetric dimethylarginine. 4 disordered regions span residues 2589-2694 (RHGN…SDDP), 2793-2887 (EPKK…RETA), 2925-2954 (EKSD…VSSL), and 2989-3029 (VNPG…SGPQ). Composition is skewed to polar residues over residues 2629-2645 (PPSQ…SSMV) and 2661-2682 (PLST…TQPS). Over residues 2793 to 2811 (EPKKKEQENKTLVLSDKHS) the composition is skewed to basic and acidic residues. N6-acetyllysine is present on residues Lys2802 and Lys2809. Residues 2814–2832 (KKSTVTNEVKTEVLSPNSK) are compositionally biased toward polar residues. Ser2828 carries the post-translational modification Phosphoserine. Lys2832 carries the post-translational modification N6-acetyllysine. Residues 2833 to 2849 (VESKCETEKNDENKDNV) are compositionally biased toward basic and acidic residues. Polar residues predominate over residues 2851 to 2860 (TPCSQASAHS). The span at 2861 to 2884 (DLNDGEKTSLHPCDPDLFEKRTNR) shows a compositional bias: basic and acidic residues. The residue at position 2867 (Lys2867) is an N6-acetyllysine. Residues 3011–3029 (TQTGPQTSQSGTSSMSGPQ) are compositionally biased toward low complexity. Coiled-coil stretches lie at residues 3054-3081 (LLQD…QRSE), 3173-3272 (NDSQ…QQQQ), and 3391-3433 (FSES…EMEQ). A compositionally biased stretch (basic residues) spans 3205-3221 (HRKSKKALSAKQRTAKK). Disordered stretches follow at residues 3205–3241 (HRKS…TEQQ), 3353–3409 (PPIA…EQQE), 3527–3583 (PNFS…HSYP), 3596–3919 (IIPE…MANG), and 4024–4053 (VKEE…SRRN). Basic and acidic residues-rich tracts occupy residues 3222 to 3238 (AGRE…KHVT) and 3395 to 3409 (FQER…EQQE). Polar residues-rich tracts occupy residues 3527–3549 (PNFS…QSPV), 3564–3583 (ANSS…HSYP), 3637–3658 (ISET…QADQ), and 3684–3701 (LPNS…TYAN). Basic and acidic residues predominate over residues 3703–3725 (EVDKLSMETPAKTEEIKLEKAET). Lys3714 is modified (N6-acetyllysine). Ser3758 carries the post-translational modification Phosphoserine. The span at 3803–3812 (DCTKDNKLVE) shows a compositional bias: basic and acidic residues. Positions 3878–3892 (MYSSTDTFTHLKQQN) are enriched in polar residues. Positions 3897–3911 (PPTPPASLPPTPPPM) are enriched in pro residues. Ser4034 is subject to Phosphoserine. Arg4139 carries the asymmetric dimethylarginine modification. Phosphoserine is present on Ser4267. The C2HC pre-PHD-type 2 zinc finger occupies 4399–4439 (YRKCCFCHEEGDGLTDGPARLLNLDLDLWVHLNCALWSTEV). The PHD-type 8 zinc-finger motif lies at 4460–4507 (MKCVFCHKTGATSGCHRFRCTNIYHFTCAIKAQCMFFKDKTMLCPMHK). One can recognise an FYR N-terminal domain in the interval 4545–4605 (DHTFRVGSLI…CRYLCSIEEK (61 aa)). Residues 4606-4691 (DGRPVFVIRI…EACENYTFRY (86 aa)) form the FYR C-terminal domain. Positions 4707-4712 (GCARSE) match the WDR5 interaction motif (WIN) motif. The 117-residue stretch at 4771–4887 (SNVYLARSRI…KGEELCYDYK (117 aa)) folds into the SET domain. S-adenosyl-L-methionine-binding positions include Tyr4825 and 4848-4849 (NH). 4 residues coordinate Zn(2+): Cys4851, Cys4899, Cys4901, and Cys4906. Residues 4895 to 4911 (HKIPCHCGAVNCRKWMN) enclose the Post-SET domain.

This sequence belongs to the class V-like SAM-binding methyltransferase superfamily. Histone-lysine methyltransferase family. TRX/MLL subfamily. As to quaternary structure, component of the MLL3 complex (also named ASCOM complex), at least composed of catalytic subunit KMT2C/MLL3, ASH2L, RBBP5, WDR5, NCOA6, DPY30, KDM6A, PAXIP1/PTIP, PAGR1 and alpha- and beta-tubulin. Forms a core complex with the evolutionary conserved subcomplex WRAD composed of WDR5, RBBP5, ASH2L/ASH2 and DPY30 subunits; WRAD differentially stimulates the methyltransferase activity. Interacts (via WIN motif) with WDR5. Highly expressed in testis and ovary, followed by brain and liver. Also expressed in placenta, peripherical blood, fetal thymus, heart, lung and kidney. Within brain, expression was highest in hippocampus, caudate nucleus, and substantia nigra. Not detected in skeletal muscle and fetal liver.

The protein localises to the nucleus. The catalysed reaction is L-lysyl(4)-[histone H3] + S-adenosyl-L-methionine = N(6)-methyl-L-lysyl(4)-[histone H3] + S-adenosyl-L-homocysteine + H(+). Its function is as follows. Histone methyltransferase that catalyzes methyl group transfer from S-adenosyl-L-methionine to the epsilon-amino group of 'Lys-4' of histone H3 (H3K4). Part of chromatin remodeling machinery predominantly forms H3K4me1 methylation marks at active chromatin sites where transcription and DNA repair take place. Likely plays a redundant role with KMT2D in enriching H3K4me1 mark on primed and active enhancer elements. This is Histone-lysine N-methyltransferase 2C (KMT2C) from Homo sapiens (Human).